The sequence spans 429 residues: 3-phosphoshikimate 1-carboxyvinyltransferase (429 aa).

Residues Lys23, Ser24, and Arg28 each coordinate 3-phosphoshikimate. A phosphoenolpyruvate-binding site is contributed by Lys23. Phosphoenolpyruvate is bound by residues Gly95 and Arg123. 4 residues coordinate 3-phosphoshikimate: Ser168, Gln170, Asp316, and Lys343. Position 170 (Gln170) interacts with phosphoenolpyruvate. The active-site Proton acceptor is the Asp316. Phosphoenolpyruvate contacts are provided by Arg347 and Arg389.

Belongs to the EPSP synthase family. Monomer.

It localises to the cytoplasm. The catalysed reaction is 3-phosphoshikimate + phosphoenolpyruvate = 5-O-(1-carboxyvinyl)-3-phosphoshikimate + phosphate. It participates in metabolic intermediate biosynthesis; chorismate biosynthesis; chorismate from D-erythrose 4-phosphate and phosphoenolpyruvate: step 6/7. Functionally, catalyzes the transfer of the enolpyruvyl moiety of phosphoenolpyruvate (PEP) to the 5-hydroxyl of shikimate-3-phosphate (S3P) to produce enolpyruvyl shikimate-3-phosphate and inorganic phosphate. In Bacillus thuringiensis (strain Al Hakam), this protein is 3-phosphoshikimate 1-carboxyvinyltransferase.